Reading from the N-terminus, the 369-residue chain is Dihydroorotate dehydrogenase (quinone) (369 aa).

Residues 76-80 and Thr-100 each bind FMN; that span reads AGLDK. Lys-80 is a binding site for substrate. 125–129 serves as a coordination point for substrate; that stretch reads NRMGF. Positions 154 and 187 each coordinate FMN. Asn-187 contributes to the substrate binding site. Ser-190 (nucleophile) is an active-site residue. Position 192 (Asn-192) interacts with substrate. Positions 232 and 260 each coordinate FMN. Substrate is bound at residue 261–262; sequence NT. FMN-binding positions include Gly-282, Gly-311, and 332-333; that span reads YS.

The protein belongs to the dihydroorotate dehydrogenase family. Type 2 subfamily. As to quaternary structure, monomer. FMN serves as cofactor.

The protein localises to the cell membrane. The catalysed reaction is (S)-dihydroorotate + a quinone = orotate + a quinol. It participates in pyrimidine metabolism; UMP biosynthesis via de novo pathway; orotate from (S)-dihydroorotate (quinone route): step 1/1. Functionally, catalyzes the conversion of dihydroorotate to orotate with quinone as electron acceptor. The polypeptide is Dihydroorotate dehydrogenase (quinone) (pyrD) (Deinococcus radiodurans (strain ATCC 13939 / DSM 20539 / JCM 16871 / CCUG 27074 / LMG 4051 / NBRC 15346 / NCIMB 9279 / VKM B-1422 / R1)).